The sequence spans 315 residues: MQKPWVEKYRPQTLSEVVGHHEIIKRLTNYVEKKSMPHLLFSGSPGVGKTTAALALAKDLYGETWRENFLELNSSDERGIDVIRTKVKDFARTKPIGDAPFKVIFLDESDALTSDAQNALRRTMEKYSDICRFVLSCNYPSKIIPPIQSRCAIFRFSPLKTEDLVENLKEISEKENLTLEKGGIDAIIYVSEGDMRKAINVLQTAAAVSDTVTEEIVYKVASKARPDEIKKMTQLALNGKFVESREQLYNLMIDWGMSGEDILIQIFREVPNLDISEKEKVHLVEAIGECDFRIVEGSNERIQLSALLAKMGILE.

43-50 (GSPGVGKT) contributes to the ATP binding site.

This sequence belongs to the activator 1 small subunits family. RfcS subfamily. Heteromultimer composed of small subunits (RfcS) and large subunits (RfcL).

In terms of biological role, part of the RFC clamp loader complex which loads the PCNA sliding clamp onto DNA. The protein is Replication factor C small subunit of Methanococcus maripaludis (strain C7 / ATCC BAA-1331).